Here is a 669-residue protein sequence, read N- to C-terminus: UvrABC system protein C (669 aa).

In terms of domain architecture, GIY-YIG spans Thr16–Val95. Residues Lys207–Val242 form the UVR domain.

This sequence belongs to the UvrC family. As to quaternary structure, interacts with UvrB in an incision complex.

It localises to the cytoplasm. In terms of biological role, the UvrABC repair system catalyzes the recognition and processing of DNA lesions. UvrC both incises the 5' and 3' sides of the lesion. The N-terminal half is responsible for the 3' incision and the C-terminal half is responsible for the 5' incision. This chain is UvrABC system protein C, found in Arthrobacter sp. (strain FB24).